The primary structure comprises 841 residues: Toll-like receptor 4 (841 aa).

An N-terminal signal peptide occupies residues 1–23; that stretch reads MMARARLAAALIPATAILSCLRT. Residues 24-632 are Extracellular-facing; sequence ESWDPCVQVV…FRNATCQLSK (609 aa). Cysteines 29 and 40 form a disulfide. N-linked (GlcNAc...) asparagine glycosylation is found at Asn35 and Asn73. 7 LRR repeats span residues 55-76, 79-100, 103-124, 127-148, 151-172, 176-197, and 205-225; these read STKM…NFSS, ELQV…TFQG, HLST…AFSG, SLQK…PIGH, NLKE…EYFS, NLEH…DVKV, and NLSL…TFKE. Residues Asn205, Asn238, Asn282, and Asn309 are each glycosylated (N-linked (GlcNAc...) asparagine). Cys281 and Cys306 are disulfide-bonded. LRR repeat units lie at residues 352–373, 374–394, 400–422, 423–444, 448–469, 472–495, 497–518, 521–542, and 545–568; these read SLKK…FQLP, SLQY…CSHT, NLKH…MGLE, QLEH…SAFL, NLRY…IFTG, SLQT…FTEL, NLTV…AFHS, SLQV…LYEP, and SLRI…QNLP. Cysteines 390 and 391 form a disulfide. 2 N-linked (GlcNAc...) asparagine glycosylation sites follow: Asn497 and Asn526. N-linked (GlcNAc...) asparagine glycosylation is present at Asn575. The LRRCT domain occupies 579–630; the sequence is NAFACVCEHQSFLQWVKDQRQLLVGAEQMMCAEPLDMEDMPVLSFRNATCQL. 2 disulfides stabilise this stretch: Cys583/Cys609 and Cys585/Cys628. N-linked (GlcNAc...) asparagine glycosylation is present at Asn625. A helical transmembrane segment spans residues 633–653; the sequence is TIISVSVVTVLLVSVVGVLVY. Residues 654–841 are Cytoplasmic-facing; it reads KFYFHLMLLA…TNPQEATTST (188 aa). Residues 673–816 form the TIR domain; sequence SIYDAFVIYS…VFWRRLRKAL (144 aa). The tract at residues 820–841 is disordered; the sequence is KPQSPEGTADAETNPQEATTST. A compositionally biased stretch (polar residues) spans 830–841; sequence AETNPQEATTST.

This sequence belongs to the Toll-like receptor family. Belongs to the lipopolysaccharide (LPS) receptor, a multi-protein complex containing at least CD14, LY96 and TLR4. Binding to bacterial LPS leads to homodimerization. Interacts with LY96 via the extracellular domain. Interacts with MYD88 and TIRAP via their respective TIR domains. Interacts with TICAM2. Interacts with NOX4. Interacts with CNPY3 and HSP90B1; this interaction is required for proper folding in the endoplasmic reticulum. Interacts with MAP3K21; this interaction leads to negative regulation of TLR4 signaling. Interacts with CD36, following CD36 stimulation by oxLDL or amyloid-beta 42, and forms a heterodimer with TLR6. The trimeric complex is internalized and triggers inflammatory response. LYN kinase activity facilitates TLR4-TLR6 heterodimerization and signal initiation. Interacts with TICAM1 in response to LPS in a WDFY1-dependent manner. Interacts with WDFY1 in response to LPS. Interacts with SMPDL3B. Interacts with CEACAM1; upon lipopolysaccharide stimulation, forms a complex including TLR4 and the phosphorylated form of SYK and CEACAM1, which in turn, recruits PTPN6 that dephosphorylates SYK, reducing the production of reactive oxygen species (ROS) and lysosome disruption, which in turn, reduces the activity of the inflammasome. Interacts with RFTN1; the interaction occurs in response to lipopolysaccharide stimulation. Interacts with SCIMP; the interaction occurs in response to lipopolysaccharide stimulation and is enhanced by phosphorylation of SCIMP by LYN. This interaction facilitates the phosphorylation of TLR4 by LYN which elicits a selective cytokine response in macrophages. Interacts with TRAF3IP3. Interacts with TREM1; this interaction enhances TLR4-mediated inflammatory response. Interacts with ZG16B/PAUF. Interacts with CD82; this interaction inhibits TLR4-mediated signaling pathway. Phosphorylated on tyrosine residues by LYN after binding lipopolysaccharide. In terms of processing, ubiquitinated by RNF128 via 'Lys-28'-linked polyubiquitin chains, leading to proteasomal degradation.

Its subcellular location is the cell membrane. The protein resides in the early endosome. It is found in the cell projection. The protein localises to the ruffle. Functionally, transmembrane receptor that functions as a pattern recognition receptor recognizing pathogen- and damage-associated molecular patterns (PAMPs and DAMPs) to induce innate immune responses via downstream signaling pathways. At the plasma membrane, cooperates with LY96 to mediate the innate immune response to bacterial lipopolysaccharide (LPS). Also involved in LPS-independent inflammatory responses triggered by free fatty acids, such as palmitate, and Ni(2+). Mechanistically, acts via MYD88, TIRAP and TRAF6, leading to NF-kappa-B activation, cytokine secretion and the inflammatory response. Alternatively, CD14-mediated TLR4 internalization via endocytosis is associated with the initiation of a MYD88-independent signaling via the TICAM1-TBK1-IRF3 axis leading to type I interferon production. In addition to the secretion of proinflammatory cytokines, initiates the activation of NLRP3 inflammasome and formation of a positive feedback loop between autophagy and NF-kappa-B signaling cascade. In complex with TLR6, promotes inflammation in monocytes/macrophages by associating with TLR6 and the receptor CD86. Upon ligand binding, such as oxLDL or amyloid-beta 42, the TLR4:TLR6 complex is internalized and triggers inflammatory response, leading to NF-kappa-B-dependent production of CXCL1, CXCL2 and CCL9 cytokines, via MYD88 signaling pathway, and CCL5 cytokine, via TICAM1 signaling pathway. In myeloid dendritic cells, vesicular stomatitis virus glycoprotein G but not LPS promotes the activation of IRF7, leading to type I IFN production in a CD14-dependent manner. The sequence is that of Toll-like receptor 4 (TLR4) from Bos taurus (Bovine).